The following is a 95-amino-acid chain: Aspartyl/glutamyl-tRNA(Asn/Gln) amidotransferase subunit C (95 aa).

The disordered stretch occupies residues 51–95 (PTSHATLTSSRLREDVTRPSLPPEKSLANAPAKSDTSFAVPKIIE).

This sequence belongs to the GatC family. Heterotrimer of A, B and C subunits.

The enzyme catalyses L-glutamyl-tRNA(Gln) + L-glutamine + ATP + H2O = L-glutaminyl-tRNA(Gln) + L-glutamate + ADP + phosphate + H(+). It catalyses the reaction L-aspartyl-tRNA(Asn) + L-glutamine + ATP + H2O = L-asparaginyl-tRNA(Asn) + L-glutamate + ADP + phosphate + 2 H(+). Its function is as follows. Allows the formation of correctly charged Asn-tRNA(Asn) or Gln-tRNA(Gln) through the transamidation of misacylated Asp-tRNA(Asn) or Glu-tRNA(Gln) in organisms which lack either or both of asparaginyl-tRNA or glutaminyl-tRNA synthetases. The reaction takes place in the presence of glutamine and ATP through an activated phospho-Asp-tRNA(Asn) or phospho-Glu-tRNA(Gln). In Myxococcus xanthus (strain DK1622), this protein is Aspartyl/glutamyl-tRNA(Asn/Gln) amidotransferase subunit C.